The sequence spans 326 residues: Protein TMED8 (326 aa).

The segment at 1-80 (MSDLQAAEGP…VSPGSKDATE (80 aa)) is disordered. The GOLD domain occupies 160 to 324 (PPCIWTFAKV…NKTLYFHIYY (165 aa)). K170 is subject to N6-acetyllysine. Residues 238-268 (DSCDDEDEEEEEEEEIEEPVPAGDVERGSRS) form a disordered region. Over residues 239–255 (SCDDEDEEEEEEEEIEE) the composition is skewed to acidic residues.

The polypeptide is Protein TMED8 (TMED8) (Pongo abelii (Sumatran orangutan)).